We begin with the raw amino-acid sequence, 147 residues long: Large ribosomal subunit protein uL13 (147 aa).

Belongs to the universal ribosomal protein uL13 family. Part of the 50S ribosomal subunit.

This protein is one of the early assembly proteins of the 50S ribosomal subunit, although it is not seen to bind rRNA by itself. It is important during the early stages of 50S assembly. The protein is Large ribosomal subunit protein uL13 of Kocuria rhizophila (strain ATCC 9341 / DSM 348 / NBRC 103217 / DC2201).